The following is a 229-amino-acid chain: tRNA (guanine-N(7)-)-methyltransferase (229 aa).

Residues E62, E87, D114, and D137 each coordinate S-adenosyl-L-methionine. D137 is an active-site residue. A substrate-binding site is contributed by K141. Positions 143–148 are interaction with RNA; sequence KHNKRR. Residues D173 and 208-211 contribute to the substrate site; that span reads TKFE.

It belongs to the class I-like SAM-binding methyltransferase superfamily. TrmB family.

The enzyme catalyses guanosine(46) in tRNA + S-adenosyl-L-methionine = N(7)-methylguanosine(46) in tRNA + S-adenosyl-L-homocysteine. The protein operates within tRNA modification; N(7)-methylguanine-tRNA biosynthesis. In terms of biological role, catalyzes the formation of N(7)-methylguanine at position 46 (m7G46) in tRNA. In Francisella philomiragia subsp. philomiragia (strain ATCC 25017 / CCUG 19701 / FSC 153 / O#319-036), this protein is tRNA (guanine-N(7)-)-methyltransferase.